Consider the following 194-residue polypeptide: Imidazoleglycerol-phosphate dehydratase (194 aa).

It belongs to the imidazoleglycerol-phosphate dehydratase family.

It localises to the cytoplasm. The catalysed reaction is D-erythro-1-(imidazol-4-yl)glycerol 3-phosphate = 3-(imidazol-4-yl)-2-oxopropyl phosphate + H2O. It participates in amino-acid biosynthesis; L-histidine biosynthesis; L-histidine from 5-phospho-alpha-D-ribose 1-diphosphate: step 6/9. This chain is Imidazoleglycerol-phosphate dehydratase, found in Thermoanaerobacter sp. (strain X514).